The chain runs to 333 residues: Protoheme IX farnesyltransferase (333 aa).

Transmembrane regions (helical) follow at residues 64-84 (LICT…LNCL), 110-130 (TVFL…VSGV), 133-153 (LAAG…TVIL), 161-181 (IVFG…AATG), 189-209 (WLFG…AILL), 246-266 (IMGV…LLPF), and 287-307 (AKSL…LLLI).

This sequence belongs to the UbiA prenyltransferase family. Protoheme IX farnesyltransferase subfamily.

The protein localises to the cell inner membrane. It carries out the reaction heme b + (2E,6E)-farnesyl diphosphate + H2O = Fe(II)-heme o + diphosphate. It functions in the pathway porphyrin-containing compound metabolism; heme O biosynthesis; heme O from protoheme: step 1/1. Converts heme B (protoheme IX) to heme O by substitution of the vinyl group on carbon 2 of heme B porphyrin ring with a hydroxyethyl farnesyl side group. This chain is Protoheme IX farnesyltransferase, found in Prochlorococcus marinus (strain MIT 9215).